The following is a 250-amino-acid chain: Ubiquinone/menaquinone biosynthesis C-methyltransferase UbiE (250 aa).

S-adenosyl-L-methionine contacts are provided by residues Thr73, Asp94, 122 to 123 (NA), and Ser139.

This sequence belongs to the class I-like SAM-binding methyltransferase superfamily. MenG/UbiE family.

It carries out the reaction a 2-demethylmenaquinol + S-adenosyl-L-methionine = a menaquinol + S-adenosyl-L-homocysteine + H(+). The catalysed reaction is a 2-methoxy-6-(all-trans-polyprenyl)benzene-1,4-diol + S-adenosyl-L-methionine = a 5-methoxy-2-methyl-3-(all-trans-polyprenyl)benzene-1,4-diol + S-adenosyl-L-homocysteine + H(+). Its pathway is quinol/quinone metabolism; menaquinone biosynthesis; menaquinol from 1,4-dihydroxy-2-naphthoate: step 2/2. The protein operates within cofactor biosynthesis; ubiquinone biosynthesis. Its function is as follows. Methyltransferase required for the conversion of demethylmenaquinol (DMKH2) to menaquinol (MKH2) and the conversion of 2-polyprenyl-6-methoxy-1,4-benzoquinol (DDMQH2) to 2-polyprenyl-3-methyl-6-methoxy-1,4-benzoquinol (DMQH2). The polypeptide is Ubiquinone/menaquinone biosynthesis C-methyltransferase UbiE (Francisella tularensis subsp. tularensis (strain FSC 198)).